Here is a 172-residue protein sequence, read N- to C-terminus: 3-hydroxydecanoyl-[acyl-carrier-protein] dehydratase (172 aa).

The active site involves H71.

Belongs to the thioester dehydratase family. FabA subfamily. Homodimer.

The protein resides in the cytoplasm. The enzyme catalyses a (3R)-hydroxyacyl-[ACP] = a (2E)-enoyl-[ACP] + H2O. It carries out the reaction (3R)-hydroxydecanoyl-[ACP] = (2E)-decenoyl-[ACP] + H2O. The catalysed reaction is (2E)-decenoyl-[ACP] = (3Z)-decenoyl-[ACP]. It functions in the pathway lipid metabolism; fatty acid biosynthesis. Functionally, necessary for the introduction of cis unsaturation into fatty acids. Catalyzes the dehydration of (3R)-3-hydroxydecanoyl-ACP to E-(2)-decenoyl-ACP and then its isomerization to Z-(3)-decenoyl-ACP. Can catalyze the dehydratase reaction for beta-hydroxyacyl-ACPs with saturated chain lengths up to 16:0, being most active on intermediate chain length. This is 3-hydroxydecanoyl-[acyl-carrier-protein] dehydratase from Escherichia coli O6:K15:H31 (strain 536 / UPEC).